The following is a 293-amino-acid chain: Elongation factor Ts (293 aa).

Residues 79–82 (TDFV) form an involved in Mg(2+) ion dislocation from EF-Tu region.

It belongs to the EF-Ts family.

The protein localises to the cytoplasm. In terms of biological role, associates with the EF-Tu.GDP complex and induces the exchange of GDP to GTP. It remains bound to the aminoacyl-tRNA.EF-Tu.GTP complex up to the GTP hydrolysis stage on the ribosome. This is Elongation factor Ts from Exiguobacterium sibiricum (strain DSM 17290 / CCUG 55495 / CIP 109462 / JCM 13490 / 255-15).